The chain runs to 419 residues: Phosphoglycerate kinase (419 aa).

Substrate contacts are provided by residues 42-44 (DLN), Arg58, 81-84 (HLGR), Arg135, and Arg168. ATP-binding positions include Lys219, Glu341, and 367–370 (GGDT).

The protein belongs to the phosphoglycerate kinase family. In terms of assembly, monomer.

The protein resides in the cytoplasm. The catalysed reaction is (2R)-3-phosphoglycerate + ATP = (2R)-3-phospho-glyceroyl phosphate + ADP. It functions in the pathway carbohydrate degradation; glycolysis; pyruvate from D-glyceraldehyde 3-phosphate: step 2/5. The polypeptide is Phosphoglycerate kinase (Ralstonia nicotianae (strain ATCC BAA-1114 / GMI1000) (Ralstonia solanacearum)).